Consider the following 526-residue polypeptide: Transcription factor kayak (526 aa).

Disordered regions lie at residues 71–165 and 178–221; these read PPLA…GTGG and RNTN…NKQA. Low complexity-rich tracts occupy residues 78 to 87 and 133 to 153; these read NNNNNNNNNG and ISDT…HMMG. Residues 154 to 165 are compositionally biased toward gly residues; sequence NSGGGNGGGTGG. Residues 178 to 187 show a composition bias toward polar residues; that stretch reads RNTNTSNSAT. Residues 208–271 form the bZIP domain; the sequence is EEKRRIRRER…NQLEYFLQAH (64 aa). Residues 210-229 form a basic motif region; it reads KRRIRRERNKQAAARCRKRR. Residues 236–264 form a leucine-zipper region; it reads LTEEVELLEKRGENLKKEMELLNETKNQL. The span at 301 to 322 shows a compositional bias: low complexity; that stretch reads GSCGSGSSHHNNNSNSNDSSSG. Disordered stretches follow at residues 301–345 and 504–526; these read GSCG…DLKP and TSQN…LVSL. Residues 330 to 340 show a composition bias toward polar residues; the sequence is TLNSTGRSNSP. The residue at position 339 (S339) is a Phosphoserine.

This sequence belongs to the bZIP family. Fos subfamily. As to quaternary structure, homodimer. Heterodimer with Jra. The kay-Jra heterodimer binds more stably to the AP-1 site than either of the two proteins alone.

It localises to the nucleus. Functionally, developmentally regulated transcription factor AP-1 binds and recognizes the enhancer DNA sequence: 5'-TGA[CG]TCA-3'. May play a role in the function or determination of a particular subset of cells in the developing embryo. It is able to carry out its function either independently of or in conjunction with Jra. This chain is Transcription factor kayak, found in Drosophila persimilis (Fruit fly).